Here is a 95-residue protein sequence, read N- to C-terminus: Ferredoxin-like protein FixX (95 aa).

This sequence belongs to the bacterial-type ferredoxin family. FixX subfamily.

Functionally, could be part of an electron transfer system required for anaerobic carnitine reduction. Could be a 3Fe-4S cluster-containing protein. In Salmonella typhimurium (strain LT2 / SGSC1412 / ATCC 700720), this protein is Ferredoxin-like protein FixX (fixX).